Consider the following 183-residue polypeptide: MMIVIKTAIPDVLILEPKVFGDERGFFFESYNQQTFEELIGRKVTFVQDNHSKSKKNVLRGLHFQRGENAQGKLVRCAVGEVFDVAVDIRKESPTFGQWVGVNLSAENKRQLWIPEGFAHGFVTLSEYAEFLYKATNYYSPSSEGSILWNDEAIGIEWPFSQLPELSAKDAAAPLLDQALLTE.

Residues Arg24, Glu29, 48–50 (QDN), and Arg60 contribute to the substrate site. The Proton acceptor role is filled by His63. 2 residues coordinate substrate: Lys73 and His120. The active-site Proton donor is Tyr133. Positions 144 and 169 each coordinate substrate.

It belongs to the dTDP-4-dehydrorhamnose 3,5-epimerase family. As to quaternary structure, homodimer.

It catalyses the reaction dTDP-4-dehydro-6-deoxy-alpha-D-glucose = dTDP-4-dehydro-beta-L-rhamnose. The protein operates within carbohydrate biosynthesis; dTDP-L-rhamnose biosynthesis. Its pathway is bacterial outer membrane biogenesis; LPS O-antigen biosynthesis. Its function is as follows. Catalyzes the epimerization of the C3' and C5'positions of dTDP-6-deoxy-D-xylo-4-hexulose, forming dTDP-6-deoxy-L-lyxo-4-hexulose. The chain is dTDP-4-dehydrorhamnose 3,5-epimerase from Salmonella typhimurium (strain LT2 / SGSC1412 / ATCC 700720).